A 750-amino-acid chain; its full sequence is Cation-transporting P-type ATPase B (750 aa).

The region spanning 17 to 80 is the HMA domain; the sequence is RRIQLDVAGM…VIEQAGYRAT (64 aa). A metal cation contacts are provided by C28 and C31. Helical transmembrane passes span 104–124, 129–149, 167–187, 200–220, 360–380, and 389–409; these read LIVA…FAIV, FPGW…WAAW, ETLI…TIFV, AILH…VFVL, IAAV…ASWL, and AFSV…GLAT. D445 serves as the catalytic 4-aspartylphosphate intermediate. 6 consecutive transmembrane segments (helical) span residues 471–491, 500–520, 547–567, 663–683, 693–713, and 715–735; these read VLAL…TAIV, VADF…EHHV, SRGE…AVAI, VAIG…VPVA, TIRI…PIAS, and GLLN…FVVS.

It belongs to the cation transport ATPase (P-type) (TC 3.A.3) family. Type IB subfamily.

It localises to the cell membrane. It carries out the reaction ATP + H2O = ADP + phosphate + H(+). This chain is Cation-transporting P-type ATPase B (ctpB), found in Mycobacterium leprae (strain TN).